Consider the following 1242-residue polypeptide: ATP-dependent helicase/nuclease subunit A (1242 aa).

A UvrD-like helicase ATP-binding domain is found at 12-487; that stretch reads SRWTDEQWKA…IDLASNFRSR (476 aa). 33 to 40 contacts ATP; the sequence is AAAGSGKT. Residues 514 to 808 enclose the UvrD-like helicase C-terminal domain; that stretch reads AAQLKYGADY…RIMTIHSSKG (295 aa).

Belongs to the helicase family. AddA subfamily. As to quaternary structure, heterodimer of AddA and AddB/RexB. Mg(2+) is required as a cofactor.

The enzyme catalyses Couples ATP hydrolysis with the unwinding of duplex DNA by translocating in the 3'-5' direction.. It carries out the reaction ATP + H2O = ADP + phosphate + H(+). Functionally, the heterodimer acts as both an ATP-dependent DNA helicase and an ATP-dependent, dual-direction single-stranded exonuclease. Recognizes the chi site generating a DNA molecule suitable for the initiation of homologous recombination. The AddA nuclease domain is required for chi fragment generation; this subunit has the helicase and 3' -&gt; 5' nuclease activities. The chain is ATP-dependent helicase/nuclease subunit A from Geobacillus kaustophilus (strain HTA426).